We begin with the raw amino-acid sequence, 814 residues long: Protein fam-161 (814 aa).

Polar residues predominate over residues 71–87 (ITQHRSSYKVTKSSSCH). 4 disordered regions span residues 71–130 (ITQH…SWSQ), 150–255 (RHQV…ATSA), 569–610 (SRSK…THAT), and 714–814 (MKSA…SSEA). Residues 99–111 (MPRHLDLKPRSSE) show a composition bias toward basic and acidic residues. A compositionally biased stretch (low complexity) spans 174-193 (STAPSQVSVTSSVQSVAALS). 2 stretches are compositionally biased toward polar residues: residues 194-207 (GQNP…TPSH) and 216-235 (RTHQ…TLQN). Residues 236–249 (PRHRTSSASRHHST) are compositionally biased toward basic residues. 2 stretches are compositionally biased toward polar residues: residues 570 to 583 (RSKS…NCQE) and 594 to 610 (ENLP…THAT). The stretch at 606 to 689 (STHATQLREE…LAEMKQRVLN (84 aa)) forms a coiled coil. The span at 714-727 (MKSAKGRGIERVQS) shows a compositional bias: basic and acidic residues. Residues 728–745 (QEKQQSIGRRSSEVSGSG) show a composition bias toward polar residues. Residues 751–765 (KGYEESFESEDKSEK) are compositionally biased toward basic and acidic residues. Low complexity-rich tracts occupy residues 766-779 (SGSS…SGSE) and 795-814 (SKST…SSEA).

It belongs to the FAM161 family. As to expression, expressed in amphid and phasmid ciliated neurons.

It is found in the cell projection. It localises to the cilium. The protein localises to the cytoplasm. The protein resides in the cytoskeleton. Its subcellular location is the cilium axoneme. In Caenorhabditis elegans, this protein is Protein fam-161.